We begin with the raw amino-acid sequence, 212 residues long: Proteasome subunit beta 2 (212 aa).

Residues 1 to 13 constitute a propeptide, removed in mature form; by autocatalysis; it reads MSVDEKVARALKG. The active-site Nucleophile is the threonine 14.

Belongs to the peptidase T1B family. The 20S proteasome core is composed of 14 alpha and 14 beta subunits that assemble into four stacked heptameric rings, resulting in a barrel-shaped structure. The two inner rings, each composed of seven catalytic beta subunits, are sandwiched by two outer rings, each composed of seven alpha subunits. The catalytic chamber with the active sites is on the inside of the barrel. Has a gated structure, the ends of the cylinder being occluded by the N-termini of the alpha-subunits. Is capped at one or both ends by the proteasome regulatory ATPase, PAN.

The protein localises to the cytoplasm. The enzyme catalyses Cleavage of peptide bonds with very broad specificity.. With respect to regulation, the formation of the proteasomal ATPase PAN-20S proteasome complex, via the docking of the C-termini of PAN into the intersubunit pockets in the alpha-rings, triggers opening of the gate for substrate entry. Interconversion between the open-gate and close-gate conformations leads to a dynamic regulation of the 20S proteasome proteolysis activity. Its function is as follows. Component of the proteasome core, a large protease complex with broad specificity involved in protein degradation. In Ignicoccus hospitalis (strain KIN4/I / DSM 18386 / JCM 14125), this protein is Proteasome subunit beta 2.